The sequence spans 141 residues: LOB domain-containing protein 34 (141 aa).

The LOB domain occupies 16 to 119 (NQCAACRHQR…SPLNYVAPVI (104 aa)).

Belongs to the LOB domain-containing protein family.

This is LOB domain-containing protein 34 (LBD34) from Arabidopsis thaliana (Mouse-ear cress).